We begin with the raw amino-acid sequence, 163 residues long: ATP synthase subunit b (163 aa).

The helical transmembrane segment at 1–21 (MISFNLTSIVNLVGFLAFMFL) threads the bilayer.

This sequence belongs to the ATPase B chain family. F-type ATPases have 2 components, F(1) - the catalytic core - and F(0) - the membrane proton channel. F(1) has five subunits: alpha(3), beta(3), gamma(1), delta(1), epsilon(1). F(0) has three main subunits: a(1), b(2) and c(10-14). The alpha and beta chains form an alternating ring which encloses part of the gamma chain. F(1) is attached to F(0) by a central stalk formed by the gamma and epsilon chains, while a peripheral stalk is formed by the delta and b chains.

It localises to the cell inner membrane. Its function is as follows. F(1)F(0) ATP synthase produces ATP from ADP in the presence of a proton or sodium gradient. F-type ATPases consist of two structural domains, F(1) containing the extramembraneous catalytic core and F(0) containing the membrane proton channel, linked together by a central stalk and a peripheral stalk. During catalysis, ATP synthesis in the catalytic domain of F(1) is coupled via a rotary mechanism of the central stalk subunits to proton translocation. In terms of biological role, component of the F(0) channel, it forms part of the peripheral stalk, linking F(1) to F(0). The sequence is that of ATP synthase subunit b from Petrotoga mobilis (strain DSM 10674 / SJ95).